Reading from the N-terminus, the 415-residue chain is Probable disease resistance protein At5g66890 (415 aa).

Residues 8-43 enclose the NB-ARC domain; that stretch reads SFDALPHNLRECFLDMASFLEDQRIIASTIIDLWSA. 6 LRR repeats span residues 229-251, 256-278, 280-303, 304-326, 328-351, and 352-373; these read SLEK…EDVS, SLQE…ISQV, SLKK…GDLR, DLET…IDRL, NLRF…GKLK, and KLEK…VKNL. Positions 239 to 260 form a coiled coil; sequence HVVDALNELEDVSETLQSLQEI.

The protein belongs to the disease resistance NB-LRR family.

Its function is as follows. Possible disease resistance protein. This Arabidopsis thaliana (Mouse-ear cress) protein is Probable disease resistance protein At5g66890.